A 433-amino-acid polypeptide reads, in one-letter code: Ornithine decarboxylase, chloroplastic (433 aa).

The residue at position 96 (Lys96) is an N6-(pyridoxal phosphate)lysine. Pyridoxal 5'-phosphate-binding positions include Ser228, Gly266, and 299–302 (EPGR). 342-343 (YD) serves as a coordination point for substrate. Cys378 acts as the Proton donor; shared with dimeric partner in catalysis. Substrate is bound at residue Asp379. Pyridoxal 5'-phosphate is bound at residue Tyr407.

The protein belongs to the Orn/Lys/Arg decarboxylase class-II family. As to quaternary structure, homodimer. Only the dimer is catalytically active, as the active sites are constructed of residues from both monomers. The cofactor is pyridoxal 5'-phosphate.

The protein resides in the plastid. Its subcellular location is the chloroplast. The catalysed reaction is L-ornithine + H(+) = putrescine + CO2. It functions in the pathway alkaloid biosynthesis; nicotine biosynthesis. Its pathway is amine and polyamine biosynthesis; putrescine biosynthesis via L-ornithine pathway; putrescine from L-ornithine: step 1/1. Functionally, involved in the biosynthesis of pyridine alkaloid natural products, leading mainly to the production of anabasine, anatabine, nicotine and nornicotine, effective deterrents against herbivores with antiparasitic and pesticide properties (neurotoxins); nornicotine serves as the precursor in the synthesis of the carcinogen compound N'-nitrosonornicotine (NNN). Catalyzes the first and rate-limiting step of polyamine biosynthesis that converts ornithine into putrescine, which is the precursor for the polyamines, spermidine and spermine. Polyamines are essential for cell proliferation and are implicated in cellular processes, ranging from DNA replication to apoptosis. In Nicotiana glauca (Glaucous tobacco), this protein is Ornithine decarboxylase, chloroplastic.